The following is a 310-amino-acid chain: Lipoyl synthase (310 aa).

7 residues coordinate [4Fe-4S] cluster: Cys41, Cys46, Cys52, Cys68, Cys72, Cys75, and Ser281. The Radical SAM core domain occupies 54-270 (GERRTATFMI…RKVAMEKGFK (217 aa)). The segment at 285–310 (DEQVNEAAKERQRIGDEKLEAAKNEA) is disordered.

It belongs to the radical SAM superfamily. Lipoyl synthase family. Requires [4Fe-4S] cluster as cofactor.

Its subcellular location is the cytoplasm. It catalyses the reaction [[Fe-S] cluster scaffold protein carrying a second [4Fe-4S](2+) cluster] + N(6)-octanoyl-L-lysyl-[protein] + 2 oxidized [2Fe-2S]-[ferredoxin] + 2 S-adenosyl-L-methionine + 4 H(+) = [[Fe-S] cluster scaffold protein] + N(6)-[(R)-dihydrolipoyl]-L-lysyl-[protein] + 4 Fe(3+) + 2 hydrogen sulfide + 2 5'-deoxyadenosine + 2 L-methionine + 2 reduced [2Fe-2S]-[ferredoxin]. It participates in protein modification; protein lipoylation via endogenous pathway; protein N(6)-(lipoyl)lysine from octanoyl-[acyl-carrier-protein]. Catalyzes the radical-mediated insertion of two sulfur atoms into the C-6 and C-8 positions of the octanoyl moiety bound to the lipoyl domains of lipoate-dependent enzymes, thereby converting the octanoylated domains into lipoylated derivatives. The sequence is that of Lipoyl synthase from Staphylococcus carnosus (strain TM300).